Reading from the N-terminus, the 457-residue chain is MLSSQSPSIYTVSRLNQSVRLLLEQEMGQVWISGEISNFTQPSSGHWYFTLKDDNAQVRCAMFRNSNRRVTFRPQHGQQVLVRANITLYEPRGDYQIIVESMQPAGEGLLQQKYEQLKAKLSAEGLFDQQFKKPLPSPAHCVGVITSKTGAALHDILHVLKRRDPSLPVIIYPTAVQGDDAPGQIVRAIELANARHECDVLIVGRGGGSLEDLWSFNDERVARAIFASQIPVVSAVGHETDVTIADFVSDMRAPTPSAAAEVVSRNQQELLRQMQNGQQRLEMAMDYFLANRTRRFTQLHHRLQQQHPQLRLERQQTVLERLRQRMNFALDNQLKRVVSHQQRMTQRLNQQNPQPKIYRTQTRIQQLEYRLAENLRARLSTTRERFGNAVTHLEAVSPLSTLARGYSVTTATDGKVLKQTKQVKAGDLMTTRLADGWVESEVKGITPAKKTRKKKPV.

Belongs to the XseA family. Heterooligomer composed of large and small subunits.

It localises to the cytoplasm. The catalysed reaction is Exonucleolytic cleavage in either 5'- to 3'- or 3'- to 5'-direction to yield nucleoside 5'-phosphates.. Bidirectionally degrades single-stranded DNA into large acid-insoluble oligonucleotides, which are then degraded further into small acid-soluble oligonucleotides. In Enterobacter sp. (strain 638), this protein is Exodeoxyribonuclease 7 large subunit.